We begin with the raw amino-acid sequence, 483 residues long: Cobyric acid synthase (483 aa).

The GATase cobBQ-type domain maps to 251–438; that stretch reads ALIVAVPMLP…LHGVFSADRF (188 aa). C333 serves as the catalytic Nucleophile. The active site involves H430.

Belongs to the CobB/CobQ family. CobQ subfamily.

It functions in the pathway cofactor biosynthesis; adenosylcobalamin biosynthesis. Functionally, catalyzes amidations at positions B, D, E, and G on adenosylcobyrinic A,C-diamide. NH(2) groups are provided by glutamine, and one molecule of ATP is hydrogenolyzed for each amidation. This chain is Cobyric acid synthase, found in Brucella melitensis biotype 2 (strain ATCC 23457).